We begin with the raw amino-acid sequence, 417 residues long: Serine hydroxymethyltransferase (417 aa).

Residues leucine 121 and 125–127 (GHL) contribute to the (6S)-5,6,7,8-tetrahydrofolate site. Position 229 is an N6-(pyridoxal phosphate)lysine (lysine 229). 354 to 356 (SPF) provides a ligand contact to (6S)-5,6,7,8-tetrahydrofolate.

It belongs to the SHMT family. In terms of assembly, homodimer. The cofactor is pyridoxal 5'-phosphate.

It is found in the cytoplasm. The catalysed reaction is (6R)-5,10-methylene-5,6,7,8-tetrahydrofolate + glycine + H2O = (6S)-5,6,7,8-tetrahydrofolate + L-serine. It participates in one-carbon metabolism; tetrahydrofolate interconversion. Its pathway is amino-acid biosynthesis; glycine biosynthesis; glycine from L-serine: step 1/1. In terms of biological role, catalyzes the reversible interconversion of serine and glycine with tetrahydrofolate (THF) serving as the one-carbon carrier. This reaction serves as the major source of one-carbon groups required for the biosynthesis of purines, thymidylate, methionine, and other important biomolecules. Also exhibits THF-independent aldolase activity toward beta-hydroxyamino acids, producing glycine and aldehydes, via a retro-aldol mechanism. The polypeptide is Serine hydroxymethyltransferase (Dichelobacter nodosus (strain VCS1703A)).